The following is a 928-amino-acid chain: Probable outer membrane protein pmp10 (928 aa).

A signal peptide spans 1–25; sequence MKSQFSWLVLSSTLACFTSCSTVFA. One can recognise an Autotransporter domain in the interval 635–928; sequence TLCSDRGFWA…NVDLGGKFQF (294 aa).

Belongs to the PMP outer membrane protein family.

The protein resides in the secreted. Its subcellular location is the cell wall. It localises to the cell outer membrane. This Chlamydia pneumoniae (Chlamydophila pneumoniae) protein is Probable outer membrane protein pmp10 (pmp10).